Here is a 466-residue protein sequence, read N- to C-terminus: Prophage integrase IntF (466 aa).

The 106-residue stretch at 134 to 239 folds into the Core-binding (CB) domain; it reads KTKVTFSVAW…LLRAFIKWSN (106 aa). The Tyr recombinase domain maps to 268 to 445; the sequence is KADDCLQKEQ…PLDLLRKWHE (178 aa). Active-site residues include R306, K328, H396, R399, and H422. Y432 functions as the O-(3'-phospho-DNA)-tyrosine intermediate in the catalytic mechanism.

This sequence belongs to the 'phage' integrase family.

Integrase is necessary for integration of the phage into the host genome by site-specific recombination. In conjunction with excisionase, integrase is also necessary for excision of the prophage from the host genome. This is Prophage integrase IntF (intF) from Escherichia coli (strain K12).